We begin with the raw amino-acid sequence, 157 residues long: uncharacterized protein (157 aa).

Disordered regions lie at residues 76 to 105 (AINQ…GPRG) and 132 to 157 (VRAP…RMRG). Residues 135–148 (PSTKPSKTSSSNNP) are compositionally biased toward low complexity.

This sequence to M.pneumoniae MPN_091 and MPN_413.

This is an uncharacterized protein from Mycoplasma pneumoniae (strain ATCC 29342 / M129 / Subtype 1) (Mycoplasmoides pneumoniae).